The chain runs to 425 residues: GTPase Obg (425 aa).

Residues 1 to 158 (MFVDVARIYV…RWLLLELKVV (158 aa)) form the Obg domain. The OBG-type G domain maps to 159–330 (ADVGLVGFPN…LLEAAYDLIR (172 aa)). GTP contacts are provided by residues 165 to 172 (GFPNAGKS), 190 to 194 (FTTLT), 212 to 215 (DIPG), 282 to 285 (NKMD), and 311 to 313 (SGA). Mg(2+) contacts are provided by serine 172 and threonine 192. In terms of domain architecture, OCT spans 345 to 422 (VYRPKEEGWR…VCDIEFELMA (78 aa)).

Belongs to the TRAFAC class OBG-HflX-like GTPase superfamily. OBG GTPase family. In terms of assembly, monomer. It depends on Mg(2+) as a cofactor.

Its subcellular location is the cytoplasm. An essential GTPase which binds GTP, GDP and possibly (p)ppGpp with moderate affinity, with high nucleotide exchange rates and a fairly low GTP hydrolysis rate. Plays a role in control of the cell cycle, stress response, ribosome biogenesis and in those bacteria that undergo differentiation, in morphogenesis control. The sequence is that of GTPase Obg from Symbiobacterium thermophilum (strain DSM 24528 / JCM 14929 / IAM 14863 / T).